We begin with the raw amino-acid sequence, 1307 residues long: Light-sensor Protein kinase (1307 aa).

The GAF domain occupies aspartate 215–valine 394. Cysteine 320 provides a ligand contact to phytochromobilin. A PAS domain is found at leucine 609–glutamate 680. The region spanning glutamine 683–arginine 739 is the PAC domain. A hinge region spans residues aspartate 779–tryptophan 1003. The Protein kinase domain occupies isoleucine 1004 to serine 1307. ATP is bound by residues leucine 1010–valine 1018 and lysine 1031. Aspartate 1127 is a catalytic residue.

This sequence in the N-terminal section; belongs to the phytochrome family. In the C-terminal section; belongs to the protein kinase superfamily. Ser/Thr protein kinase family. As to quaternary structure, homodimer. Post-translationally, contains one covalently linked phytochromobilin chromophore.

The protein localises to the cell membrane. It catalyses the reaction L-seryl-[protein] + ATP = O-phospho-L-seryl-[protein] + ADP + H(+). The catalysed reaction is L-threonyl-[protein] + ATP = O-phospho-L-threonyl-[protein] + ADP + H(+). Its function is as follows. Regulatory photoreceptor which exists in two forms that are reversibly interconvertible by light: the Pr form that absorbs maximally in the red region of the spectrum and the Pfr form that absorbs maximally in the far-red region. Photoconversion of Pr to Pfr induces an array of morphogenic responses, whereas reconversion of Pfr to Pr cancels the induction of those responses. Pfr controls the expression of a number of nuclear genes including those encoding the small subunit of ribulose-bisphosphate carboxylase, chlorophyll A/B binding protein, protochlorophyllide reductase, rRNA, etc. It also controls the expression of its own gene(s) in a negative feedback fashion. This is Light-sensor Protein kinase (PHY1) from Ceratodon purpureus (Fire moss).